The following is a 401-amino-acid chain: Chalcone synthase 6 (401 aa).

Cys168 is a catalytic residue.

Belongs to the thiolase-like superfamily. Chalcone/stilbene synthases family.

It catalyses the reaction (E)-4-coumaroyl-CoA + 3 malonyl-CoA + 3 H(+) = 2',4,4',6'-tetrahydroxychalcone + 3 CO2 + 4 CoA. Its pathway is secondary metabolite biosynthesis; flavonoid biosynthesis. Its function is as follows. The primary product of this enzyme is 4,2',4',6'-tetrahydroxychalcone (also termed naringenin-chalcone or chalcone) which can under specific conditions spontaneously isomerize into naringenin. In Sorghum bicolor (Sorghum), this protein is Chalcone synthase 6 (CHS6).